The chain runs to 300 residues: TLR adapter interacting with SLC15A4 on the lysosome (300 aa).

A pLxIS motif motif is present at residues serine 289–serine 293. Serine 293 is modified (phosphoserine).

In terms of assembly, interacts (via pLxIS motif) with IRF5; leading to IRF5 activation. Interacts with SLC15A4; leading to its recruitment to endolysosome. The phosphorylated pLxIS motif constitutes an IRF5-binding motif, leading to recruitment of the transcription factor IRF5 to induce type-I interferons and other cytokines.

Its subcellular location is the lysosome membrane. It localises to the endosome membrane. The protein resides in the nucleus. The protein localises to the cytoplasm. Functionally, innate immune adapter that mediates the recruitment and activation of IRF5 downstream of endolysosomal toll-like receptors TLR7, TLR8 and TLR9. Following recruitment to endolysosome by SLC15A4 downstream of TLR7, TLR8 and TLR9, specifically recruits IRF5 transcription factor via its pLxIS motif, leading to IRF5 activation and subsequent expression of type I interferons. Plays a role in the regulation of endolysosomal pH in immune cells such as B-cells, dendritic cells and monocytes. The polypeptide is TLR adapter interacting with SLC15A4 on the lysosome (Bos taurus (Bovine)).